We begin with the raw amino-acid sequence, 429 residues long: GTPase Obg (429 aa).

The Obg domain maps to 1-158 (MFYDTAKIYV…RWLLLELKLL (158 aa)). The OBG-type G domain occupies 159–329 (ADVGLVGYPN…LIYRLWEIIS (171 aa)). Residues 165-172 (GYPNAGKS), 190-194 (FTTLT), 212-215 (DIPG), 282-285 (NKMD), and 310-312 (SAL) each bind GTP. Positions 172 and 192 each coordinate Mg(2+). Residues 344-421 (IKEQPEEGFV…IGKFEFYFVD (78 aa)) form the OCT domain.

The protein belongs to the TRAFAC class OBG-HflX-like GTPase superfamily. OBG GTPase family. In terms of assembly, monomer. It depends on Mg(2+) as a cofactor.

It localises to the cytoplasm. In terms of biological role, an essential GTPase which binds GTP, GDP and possibly (p)ppGpp with moderate affinity, with high nucleotide exchange rates and a fairly low GTP hydrolysis rate. Plays a role in control of the cell cycle, stress response, ribosome biogenesis and in those bacteria that undergo differentiation, in morphogenesis control. The chain is GTPase Obg from Carboxydothermus hydrogenoformans (strain ATCC BAA-161 / DSM 6008 / Z-2901).